We begin with the raw amino-acid sequence, 610 residues long: WD repeat-containing protein 46 (610 aa).

The tract at residues 1-103 (METAPKPGKD…TQDPFPGPAP (103 aa)) is disordered. Residues 7 to 19 (PGKDVPPKKDKLQ) show a composition bias toward basic and acidic residues. Phosphoserine is present on Ser41. Residues 65 to 77 (KKSRISKKPQVPK) show a composition bias toward basic residues. 6 WD repeats span residues 193–234 (LRQF…CEIN), 235–272 (VMEAVRDIRFLHSEALLAVAQNRWLHIYDNQGIELHCI), 274–312 (RCDRVTRLEFLPFHFLLATASETGFLTYLDVSVGKIVAA), 315–354 (ARAGRLDVMSQNPYNAVIHLGHSNGTVSLWSPAMKEPLAK), 357–396 (CHRGGVRAVAVDSTGTYMATSGLDHQLKIFDLRGTYQPLS), and 399–436 (TLPHGAGHLAFSQRGLLVAGMGDVVNIWAGQGKASPPS). The disordered stretch occupies residues 538-610 (ERLGYDPQAK…RPSALDRFVR (73 aa)). Basic and acidic residues predominate over residues 572–582 (VMDEEHRDKVR).

As to quaternary structure, part of the small subunit (SSU) processome, composed of more than 70 proteins and the RNA chaperone small nucleolar RNA (snoRNA) U3. Interacts with DDX21, NCL, NOP2 and EBNA1BP2.

The protein resides in the nucleus. It localises to the nucleolus. Functionally, scaffold component of the nucleolar structure. Required for localization of DDX21 and NCL to the granular compartment of the nucleolus. Part of the small subunit (SSU) processome, first precursor of the small eukaryotic ribosomal subunit. During the assembly of the SSU processome in the nucleolus, many ribosome biogenesis factors, an RNA chaperone and ribosomal proteins associate with the nascent pre-rRNA and work in concert to generate RNA folding, modifications, rearrangements and cleavage as well as targeted degradation of pre-ribosomal RNA by the RNA exosome. In Homo sapiens (Human), this protein is WD repeat-containing protein 46 (WDR46).